The sequence spans 817 residues: Dual specificity tyrosine-phosphorylation-regulated kinase mbk-2 (817 aa).

Disordered regions lie at residues 1–46 (MAAL…HECP), 70–148 (PTSF…GPLG), 186–206 (GSYE…GSQQ), and 301–396 (LPNV…FRPE). A compositionally biased stretch (polar residues) spans 7–25 (FTRNSRSYGQQPIDVTQQG). 2 stretches are compositionally biased toward low complexity: residues 70–81 (PTSFSGASSSSS) and 97–111 (NLLG…SNSL). Composition is skewed to polar residues over residues 122–143 (SGNT…TNNL) and 193–206 (GQAQ…GSQQ). Positions 303 to 318 (NVGTSSSNGSSNSSSG) are enriched in low complexity. A compositionally biased stretch (polar residues) spans 327-351 (LMTQSIGGPNKHLSASHSTLNTAST). Serine 362 is modified (phosphoserine; by cdk-1). Over residues 364 to 392 (SNESLSRSHTSSSGGSQGGHNSNSGSNSG) the composition is skewed to low complexity. Positions 461-774 (YEVLKVIGKG…PAQALKHKWL (314 aa)) constitute a Protein kinase domain. ATP contacts are provided by residues 467 to 475 (IGKGSFGQV) and lysine 490. Catalysis depends on aspartate 587, which acts as the Proton acceptor. The residue at position 621 (tyrosine 621) is a Phosphotyrosine; by autocatalysis.

It belongs to the protein kinase superfamily. CMGC Ser/Thr protein kinase family. MNB/DYRK subfamily. As to quaternary structure, part of a complex, consisting of pseudophosphatases egg-3, egg-4, egg-5 and kinase mbk-2; this complex is required for the oocyte-to-zygote transition. Interacts (via Tyr-619 and Tyr-621) with egg-4 (via tyrosine-protein phosphatase domain) and egg-5 (via tyrosine-protein phosphatase domain); mbk-2 tyrosine phosphorylation enhances the interaction. The interaction inhibits mbk-2 kinase activity and is required for mbk-2 oocyte cortex localization. Interacts (via N-terminus) with egg-3 (via tyrosine-protein phosphatase domain); the interaction does not affect mbk-2 kinase activity, is enhanced by mbk-2 tyrosine phosphorylation status and requires prior binding of mbk-2 to egg-4 and egg-5. Requires Mg(2+) as cofactor. Autophosphorylated. As to expression, in L1 larvae, expressed widely in the nervous system, including head neurons and the ventral nerve cord. In adult animals, continues to be expressed in the nervous system and is also expressed in body wall muscle.

The protein resides in the cytoplasm. It is found in the cell cortex. It carries out the reaction L-seryl-[protein] + ATP = O-phospho-L-seryl-[protein] + ADP + H(+). It catalyses the reaction L-threonyl-[protein] + ATP = O-phospho-L-threonyl-[protein] + ADP + H(+). The catalysed reaction is L-tyrosyl-[protein] + ATP = O-phospho-L-tyrosyl-[protein] + ADP + H(+). Its activity is regulated as follows. Activated during oocyte maturation by phosphorylation on Ser-362 by cdk-1. The pseudotyrosine phosphatases egg-4 and egg-5 sequester activated mbk-2 until the meiotic divisions and inhibit mbk-2 kinase activity directly, using a mixed-inhibition mechanism that does not involve tyrosine dephosphorylation. Required for oocyte-to-zygote transition in which it phosphorylates oocyte proteins, including mei-1, oma-1, oma-2, mex-5, and mex-6, modifying their activity and/or stability following meiosis. Through phosphorylation of P granule components including meg-1, promotes the disassembly of zygotic P granules in the anterior cytoplasm during zygote polarization, and thus plays a role in P granule distribution and segregation in early stage embryos following meiosis. Functions in both spindle positioning and in the posterior localization of cytoplasmic determinants, including pie-1, pos-1, and pgl-1, in early embryos. Involved in the asymmetric distribution of plk-1 at the 2-cell embryonic stage. The chain is Dual specificity tyrosine-phosphorylation-regulated kinase mbk-2 from Caenorhabditis elegans.